A 255-amino-acid chain; its full sequence is Flap endonuclease Xni (255 aa).

Asp-105 contributes to the Mg(2+) binding site. In terms of domain architecture, 5'-3' exonuclease spans 162 to 254 (EHKQFIDYLA…LKQFRLPKAN (93 aa)). K(+) is bound by residues Leu-172, Ala-173, Pro-181, Val-183, and Ile-186. Residues 185-190 (GIGPKS) form an interaction with DNA region.

The protein belongs to the Xni family. Mg(2+) serves as cofactor. It depends on K(+) as a cofactor.

Functionally, has flap endonuclease activity. During DNA replication, flap endonucleases cleave the 5'-overhanging flap structure that is generated by displacement synthesis when DNA polymerase encounters the 5'-end of a downstream Okazaki fragment. The sequence is that of Flap endonuclease Xni from Shewanella piezotolerans (strain WP3 / JCM 13877).